Consider the following 182-residue polypeptide: Transcription termination/antitermination protein NusG (182 aa).

Residues 131 to 163 enclose the KOW domain; sequence VGEQVRIQSGPFANQIGEVQEIEADKFKLTVLV.

It belongs to the NusG family.

Functionally, participates in transcription elongation, termination and antitermination. In Staphylococcus epidermidis (strain ATCC 35984 / DSM 28319 / BCRC 17069 / CCUG 31568 / BM 3577 / RP62A), this protein is Transcription termination/antitermination protein NusG.